Consider the following 256-residue polypeptide: Ubiquinone/menaquinone biosynthesis C-methyltransferase UbiE (256 aa).

Residues threonine 79, aspartate 100, and 128–129 (DA) contribute to the S-adenosyl-L-methionine site.

It belongs to the class I-like SAM-binding methyltransferase superfamily. MenG/UbiE family.

The enzyme catalyses a 2-demethylmenaquinol + S-adenosyl-L-methionine = a menaquinol + S-adenosyl-L-homocysteine + H(+). It carries out the reaction a 2-methoxy-6-(all-trans-polyprenyl)benzene-1,4-diol + S-adenosyl-L-methionine = a 5-methoxy-2-methyl-3-(all-trans-polyprenyl)benzene-1,4-diol + S-adenosyl-L-homocysteine + H(+). It functions in the pathway quinol/quinone metabolism; menaquinone biosynthesis; menaquinol from 1,4-dihydroxy-2-naphthoate: step 2/2. The protein operates within cofactor biosynthesis; ubiquinone biosynthesis. Functionally, methyltransferase required for the conversion of demethylmenaquinol (DMKH2) to menaquinol (MKH2) and the conversion of 2-polyprenyl-6-methoxy-1,4-benzoquinol (DDMQH2) to 2-polyprenyl-3-methyl-6-methoxy-1,4-benzoquinol (DMQH2). The sequence is that of Ubiquinone/menaquinone biosynthesis C-methyltransferase UbiE from Pseudomonas aeruginosa (strain LESB58).